A 126-amino-acid polypeptide reads, in one-letter code: MNKGTVAELRLEHNTVVATLEEEVKREQAKQLQATERMLVDSDDHAFVYVLEDEETFFYLRFPEATWTVLKEGMNSGKEVVAHLNQETLITCHNFYNELRYLIDNIAGNGNYGEEMERAVQNAFGE.

The protein belongs to the UPF0738 family.

The chain is UPF0738 protein BH2850 from Halalkalibacterium halodurans (strain ATCC BAA-125 / DSM 18197 / FERM 7344 / JCM 9153 / C-125) (Bacillus halodurans).